The following is a 152-amino-acid chain: Large ribosomal subunit protein bL9 (152 aa).

Belongs to the bacterial ribosomal protein bL9 family.

Binds to the 23S rRNA. In Trichormus variabilis (strain ATCC 29413 / PCC 7937) (Anabaena variabilis), this protein is Large ribosomal subunit protein bL9.